A 543-amino-acid chain; its full sequence is Chaperonin GroEL (543 aa).

ATP is bound by residues 30–33 (TLGP), lysine 51, 87–91 (DGTTT), glycine 415, 479–481 (NAA), and aspartate 495.

Belongs to the chaperonin (HSP60) family. In terms of assembly, forms a cylinder of 14 subunits composed of two heptameric rings stacked back-to-back. Interacts with the co-chaperonin GroES.

It localises to the cytoplasm. The catalysed reaction is ATP + H2O + a folded polypeptide = ADP + phosphate + an unfolded polypeptide.. In terms of biological role, together with its co-chaperonin GroES, plays an essential role in assisting protein folding. The GroEL-GroES system forms a nano-cage that allows encapsulation of the non-native substrate proteins and provides a physical environment optimized to promote and accelerate protein folding. The chain is Chaperonin GroEL from Francisella philomiragia subsp. philomiragia (strain ATCC 25017 / CCUG 19701 / FSC 153 / O#319-036).